Reading from the N-terminus, the 211-residue chain is Pyruvate dehydrogenase E1 component subunit beta, mitochondrial (211 aa).

The residue at position 31 (tyrosine 31) is a Phosphotyrosine. 5 residues coordinate K(+): isoleucine 48, alanine 96, isoleucine 97, aspartate 99, and asparagine 101.

In terms of assembly, heterotetramer of two PDHA1 and two PDHB subunits. The heterotetramer interacts with DLAT, and is part of the multimeric pyruvate dehydrogenase complex that contains multiple copies of pyruvate dehydrogenase (E1), dihydrolipoamide acetyltransferase (DLAT, E2) and lipoamide dehydrogenase (DLD, E3). These subunits are bound to an inner core composed of about 48 DLAT and 12 PDHX molecules. Interacts with DLAT. Thiamine diphosphate serves as cofactor.

It localises to the mitochondrion matrix. It catalyses the reaction N(6)-[(R)-lipoyl]-L-lysyl-[protein] + pyruvate + H(+) = N(6)-[(R)-S(8)-acetyldihydrolipoyl]-L-lysyl-[protein] + CO2. In terms of biological role, the pyruvate dehydrogenase complex catalyzes the overall conversion of pyruvate to acetyl-CoA and CO(2), and thereby links the glycolytic pathway to the tricarboxylic cycle. This Mesocricetus auratus (Golden hamster) protein is Pyruvate dehydrogenase E1 component subunit beta, mitochondrial.